The following is a 116-amino-acid chain: Large ribosomal subunit protein bL20 (116 aa).

This sequence belongs to the bacterial ribosomal protein bL20 family.

Binds directly to 23S ribosomal RNA and is necessary for the in vitro assembly process of the 50S ribosomal subunit. It is not involved in the protein synthesizing functions of that subunit. This chain is Large ribosomal subunit protein bL20, found in Acaryochloris marina (strain MBIC 11017).